The primary structure comprises 124 residues: Large ribosomal subunit protein bL21 (124 aa).

It belongs to the bacterial ribosomal protein bL21 family. In terms of assembly, part of the 50S ribosomal subunit. Contacts protein L20.

Its function is as follows. This protein binds to 23S rRNA in the presence of protein L20. The chain is Large ribosomal subunit protein bL21 from Synechococcus sp. (strain WH7803).